The following is a 574-amino-acid chain: NADH-ubiquinone oxidoreductase chain 5 (574 aa).

16 helical membrane passes run 10-30 (VASKLMWVIFTGMLAPTLYMV), 50-70 (MMMTIILDPLGLMFSCTVVMI), 87-107 (FINRFTVLVLLFVLSMNMLIF), 111-131 (LIILLLGWDGLGIVSFILVIY), 141-161 (GMITALTNRIGDVMLLLAIAW), 181-203 (YQALVIIIAAMTKSAQMPFSSWL), 211-231 (TPVSALVHSSTLVTAGVFLLI), 240-260 (VWWFTTFLLFVAVSTTLMAGL), 280-300 (LGMMMAAMGLGMAHMAFFHMV), 301-321 (THAMFKALLFVCAGSFIHSHM), 340-360 (TSCLIMANLALCGFPFMSGFY), 381-401 (LILFAVGLTAFYSTRFTMCVV), 423-443 (MLLLASMSVISGSALTWILPL), 458-478 (TLMLVTLGALMSWFFLTTTNM), 489-509 (IINYFSCTMWFLVPLSSQFMM), and 554-574 (TPMNYLMMSSMLLLVATLVAI).

The protein belongs to the complex I subunit 5 family.

It is found in the mitochondrion inner membrane. It catalyses the reaction a ubiquinone + NADH + 5 H(+)(in) = a ubiquinol + NAD(+) + 4 H(+)(out). In terms of biological role, core subunit of the mitochondrial membrane respiratory chain NADH dehydrogenase (Complex I) that is believed to belong to the minimal assembly required for catalysis. Complex I functions in the transfer of electrons from NADH to the respiratory chain. The immediate electron acceptor for the enzyme is believed to be ubiquinone. This is NADH-ubiquinone oxidoreductase chain 5 (ND5) from Lumbricus terrestris (Common earthworm).